Consider the following 310-residue polypeptide: Porphobilinogen deaminase (310 aa).

At Cys-242 the chain carries S-(dipyrrolylmethanemethyl)cysteine.

Belongs to the HMBS family. In terms of assembly, monomer. It depends on dipyrromethane as a cofactor.

The enzyme catalyses 4 porphobilinogen + H2O = hydroxymethylbilane + 4 NH4(+). It participates in porphyrin-containing compound metabolism; protoporphyrin-IX biosynthesis; coproporphyrinogen-III from 5-aminolevulinate: step 2/4. In terms of biological role, tetrapolymerization of the monopyrrole PBG into the hydroxymethylbilane pre-uroporphyrinogen in several discrete steps. This is Porphobilinogen deaminase from Shewanella baltica (strain OS223).